Reading from the N-terminus, the 1343-residue chain is MGYSYSEKKRIRKDFGKRPQVLNVPYLLTIQLDSFDKFIQKDPEGQQGLEAAFRSVFPIVSNNGYTELQYVDYRLEEPEFDVRECQIRGSTYAAGLRVKLRLVSYDKESSSRAVKDIKENEVYMGEIPLMTDNGTFVINGTERVIVSQLHRSPGVFFDSDKGKTHSSGKVLYNARIIPYRGSWLDFEFDPKDNLFARIDRRRKLPATIILRALGYTTEEILNLFFDKITFEISGDKLLMTLVPERLRGETASFDIEANGKVYVERGRRITARHIKALEKDNISQVVVPSEYILGKVASKDYVDLESGEIICPANGEISLETLAKLAQAGYTTIETLFTNDLDYGPYISETLRVDPTYDKTSALYEIYRMMRPGEPPTPESSEALFNNLFFSAERYDLSTVGRMKFNRSLAFPEGEGAGILSNEDIIAVMRKLIDIRNGRGEVDDIDHLGNRRIRSVGEMAENQFRIGLVRVERAVKERLSLGDLDAITPQDLINPKPISAAVKEFFGSSQLSQFMDQNNPLSEVTHKRRISALGPGGLTRERAGFEVRDVHNTHYGRLCPIETPEGPNIGLINSLSAFARTNDYGFLETPYRKVVDGQVTEEIEYLSAIDEANYIIAQANSNLDENNRFTDAFVTARGERGESGLYKPEDIHYMDVSTQQVVSVAAALIPFLEHDDANRALMGANMQRQAVPTLRADKPLVGTGMEKPIALDSGVAVVAKRGGTVQYVDASRIVIKVNEDETIAGEAGIDIYNLIKYTRSNQNTCINQIPCVNLGDPINRGEVLADGPSTDLGELALGQNIRVAFMPWNGYNFEDSMLVSERVVQQDRFTTIHIQELSCVARDTKLGSEEITADIPNVGESALSKLDESGIVYVGAEVKGGDILVGKVTPKGETQLTPEEKLLRAIFGEKASDVKDSSLRVPNGTSGTVIDVQVFTRDGVEKDKRALEIEEMQLREAKKDLTEELEILEAGLFARVRNLLISSGADAAQLDKLDRTKWLEQTIADEEKQNQLEQLAEQYEELRKEFEHKLEVKRKKIIKGDDLAPGVLKVVKVYLAVKRQIQPGDKMAGRHGNKGVISKINPVEDMPYDENGQPVEIVLNPLGVPSRMNIGQILETHLGLAAKGIGDQINTMLKQKQEVEKLRSYIQKAYDLLGNGSQKVDLSTFTDEEVLRLAGNLRKGLPVATPVFDGADEAEIKELLKLGGLPTSGQITLYDGRTGEKFERPVTVGYMYMLKLNHLVDDKMHARSTGSYSLVTQQPLGGKAQFGGQRFGEMEVWALEAYGAAYTLQEMLTVKSDDVNGRTKMYKNIVSGNQHMDPGTPESFNVIMKEIRSLGLNIELDEE.

This sequence belongs to the RNA polymerase beta chain family. As to quaternary structure, the RNAP catalytic core consists of 2 alpha, 1 beta, 1 beta' and 1 omega subunit. When a sigma factor is associated with the core the holoenzyme is formed, which can initiate transcription.

It catalyses the reaction RNA(n) + a ribonucleoside 5'-triphosphate = RNA(n+1) + diphosphate. In terms of biological role, DNA-dependent RNA polymerase catalyzes the transcription of DNA into RNA using the four ribonucleoside triphosphates as substrates. This chain is DNA-directed RNA polymerase subunit beta, found in Haemophilus influenzae (strain PittEE).